Reading from the N-terminus, the 448-residue chain is Methylenetetrahydrofolate--tRNA-(uracil-5-)-methyltransferase TrmFO (448 aa).

10–15 (GAGLAG) provides a ligand contact to FAD.

The protein belongs to the MnmG family. TrmFO subfamily. The cofactor is FAD.

It is found in the cytoplasm. The catalysed reaction is uridine(54) in tRNA + (6R)-5,10-methylene-5,6,7,8-tetrahydrofolate + NADH + H(+) = 5-methyluridine(54) in tRNA + (6S)-5,6,7,8-tetrahydrofolate + NAD(+). It carries out the reaction uridine(54) in tRNA + (6R)-5,10-methylene-5,6,7,8-tetrahydrofolate + NADPH + H(+) = 5-methyluridine(54) in tRNA + (6S)-5,6,7,8-tetrahydrofolate + NADP(+). Functionally, catalyzes the folate-dependent formation of 5-methyl-uridine at position 54 (M-5-U54) in all tRNAs. In Lactococcus lactis subsp. cremoris (strain SK11), this protein is Methylenetetrahydrofolate--tRNA-(uracil-5-)-methyltransferase TrmFO.